A 237-amino-acid chain; its full sequence is Phosphoribosylaminoimidazole-succinocarboxamide synthase (237 aa).

This sequence belongs to the SAICAR synthetase family.

It catalyses the reaction 5-amino-1-(5-phospho-D-ribosyl)imidazole-4-carboxylate + L-aspartate + ATP = (2S)-2-[5-amino-1-(5-phospho-beta-D-ribosyl)imidazole-4-carboxamido]succinate + ADP + phosphate + 2 H(+). The protein operates within purine metabolism; IMP biosynthesis via de novo pathway; 5-amino-1-(5-phospho-D-ribosyl)imidazole-4-carboxamide from 5-amino-1-(5-phospho-D-ribosyl)imidazole-4-carboxylate: step 1/2. The protein is Phosphoribosylaminoimidazole-succinocarboxamide synthase of Deinococcus deserti (strain DSM 17065 / CIP 109153 / LMG 22923 / VCD115).